We begin with the raw amino-acid sequence, 1406 residues long: Protein crumbs homolog 1 (1406 aa).

Positions 1-25 (MALKNINYLLIFYLSFSLLIYIKNS) are cleaved as a signal peptide. Residues 26–1347 (FCNKNNTRCL…DDLISDIFTT (1322 aa)) are Extracellular-facing. Asparagine 30, asparagine 41, and asparagine 42 each carry an N-linked (GlcNAc...) asparagine glycan. 3 EGF-like domains span residues 30–68 (NNTRCLSNSCQNNSTCKDFSKDNDCSCSDTANNLDKDCD), 70–108 (MKDPCFSNPCQGSATCVNTPGERSFLCKCPPGYSGTICE), and 110–146 (TIGSCGKNSCQHGGICHQDPIYPVCICPAGYAGRFCE). Disulfide bonds link cysteine 34-cysteine 45, cysteine 39-cysteine 54, cysteine 56-cysteine 67, cysteine 74-cysteine 85, cysteine 79-cysteine 96, cysteine 98-cysteine 107, cysteine 114-cysteine 125, cysteine 119-cysteine 134, cysteine 136-cysteine 145, cysteine 152-cysteine 163, cysteine 157-cysteine 172, cysteine 174-cysteine 183, cysteine 190-cysteine 201, cysteine 195-cysteine 210, cysteine 212-cysteine 221, cysteine 228-cysteine 239, cysteine 233-cysteine 248, cysteine 250-cysteine 259, cysteine 266-cysteine 277, and cysteine 271-cysteine 286. Residues 148–184 (DHDECASSPCQNGAVCQDGIDGYSCFCVPGYQGRHCD) enclose the EGF-like 4; calcium-binding domain. Residues 186–222 (EVDECASDPCKNEATCLNEIGRYTCICPHNYSGVNCE) form the EGF-like 5; calcium-binding domain. Residue asparagine 215 is glycosylated (N-linked (GlcNAc...) asparagine). Residues 224–260 (EIDECWSQPCLNGATCQDALGAYFCDCAPGFLGDHCE) enclose the EGF-like 6; calcium-binding domain. The EGF-like 7; calcium-binding domain occupies 262–299 (NTDECASQPCLHGGLCVDGENRYSCNCTGSGFTGTHCE). An N-linked (GlcNAc...) asparagine glycan is attached at asparagine 287. 13 cysteine pairs are disulfide-bonded: cysteine 288/cysteine 298, cysteine 305/cysteine 316, cysteine 310/cysteine 325, cysteine 327/cysteine 336, cysteine 343/cysteine 354, cysteine 348/cysteine 383, cysteine 385/cysteine 394, cysteine 401/cysteine 412, cysteine 406/cysteine 421, cysteine 423/cysteine 438, cysteine 445/cysteine 456, cysteine 450/cysteine 469, and cysteine 471/cysteine 480. 2 EGF-like domains span residues 301–337 (LMPLCWSKPCHNNATCEDSVDNYTCHCWPGYTGAQCE) and 339–395 (DLNE…IHCE). Residues asparagine 313 and asparagine 322 are each glycosylated (N-linked (GlcNAc...) asparagine). The EGF-like 10; calcium-binding domain occupies 397 to 439 (DVNECSSNPCQNGGTCENLPGNYTCHCPFDNLSRTFYGGRDCS). Asparagine 418, asparagine 427, and asparagine 453 each carry an N-linked (GlcNAc...) asparagine glycan. In terms of domain architecture, EGF-like 11 spans 441–481 (ILLGCTHQQCLNNGTCIPHFQDGQHGFSCLCPSGYTGSLCE). One can recognise a Laminin G-like 1 domain in the interval 485–670 (TLSFEGDGFL…GSSLNVKAGC (186 aa)). 3 N-linked (GlcNAc...) asparagine glycosylation sites follow: asparagine 550, asparagine 561, and asparagine 657. Disulfide bonds link cysteine 642–cysteine 670, cysteine 676–cysteine 687, cysteine 681–cysteine 696, and cysteine 698–cysteine 707. The 37-residue stretch at 672–708 (RKDWCESQPCQSRGRCINLWLSYQCDCHRPYEGPNCL) folds into the EGF-like 12 domain. Residues 714–885 (GRFGQDDSTG…PVLVNVTQGC (172 aa)) form the Laminin G-like 2 domain. N-linked (GlcNAc...) asparagine glycosylation is found at asparagine 757, asparagine 871, and asparagine 880. Intrachain disulfides connect cysteine 851–cysteine 885, cysteine 891–cysteine 902, cysteine 896–cysteine 911, cysteine 913–cysteine 922, cysteine 928–cysteine 939, and cysteine 933–cysteine 948. 2 consecutive EGF-like domains span residues 887 to 923 (GDNSCKSNPCHNGGVCHSRWDDFSCSCPALTSGKACE) and 924 to 960 (EVQWCGFSPCPHGAQCQPVLQGFECIANAVFNGQSGQ). Positions 950–1137 (ANAVFNGQSG…ISTNSVVTGC (188 aa)) constitute a Laminin G-like 3 domain. 3 N-linked (GlcNAc...) asparagine glycosylation sites follow: asparagine 968, asparagine 975, and asparagine 1000. 16 disulfides stabilise this stretch: cysteine 1096/cysteine 1137, cysteine 1143/cysteine 1154, cysteine 1148/cysteine 1163, cysteine 1165/cysteine 1174, cysteine 1181/cysteine 1191, cysteine 1186/cysteine 1200, cysteine 1202/cysteine 1211, cysteine 1218/cysteine 1229, cysteine 1223/cysteine 1238, cysteine 1240/cysteine 1249, cysteine 1259/cysteine 1274, cysteine 1268/cysteine 1283, cysteine 1285/cysteine 1294, cysteine 1301/cysteine 1312, cysteine 1306/cysteine 1321, and cysteine 1323/cysteine 1332. Residues 1139–1175 (QLNVCNSNPCLHGGNCEDIYSSYHCSCPLGWSGKHCE) enclose the EGF-like 15 domain. The 36-residue stretch at 1177 to 1212 (NIDECFSNPCIHGNCSDRVAAYHCTCEPGYTGVNCE) folds into the EGF-like 16; calcium-binding domain. Asparagine 1190 is a glycosylation site (N-linked (GlcNAc...) asparagine). 2 EGF-like domains span residues 1214–1250 (DIDNCQSHQCANGATCISHTNGYSCLCFGNFTGKFCR) and 1255–1295 (PSTV…EWCE). 3 N-linked (GlcNAc...) asparagine glycosylation sites follow: asparagine 1243, asparagine 1265, and asparagine 1273. Positions 1297–1333 (DIDECASDPCVNGGLCQDLLNKFQCLCDVAFAGERCE) constitute an EGF-like 19; calcium-binding domain. Residues 1348–1368 (IGSVTVALLLILLLAIVASVV) form a helical membrane-spanning segment. Topologically, residues 1369–1406 (TSNKRATQGTYSPSRQEKEGSRVEMWNLMPPPAMERLI) are cytoplasmic. Residues 1370 to 1406 (SNKRATQGTYSPSRQEKEGSRVEMWNLMPPPAMERLI) form an interaction with EPB41L5 region.

Belongs to the Crumbs protein family. As to quaternary structure, component of a complex composed of PALS1, CRB1 and EPB41L5. Within the complex, interacts (via intracellular domain) with PALS1 and EPB41L5 (via FERM domain). Forms a complex with MPP4 and PALS1. Interacts with MPDZ/MUPP1 and MPP4. Post-translationally, extensively glycosylated. As to expression, preferential expression in retina, also expressed in brain, testis, fetal brain and fetal eye. Expressed at the outer limiting membrane and apical to adherens junctions in the retina.

Its subcellular location is the apical cell membrane. It is found in the secreted. It localises to the cell projection. The protein localises to the cilium. The protein resides in the photoreceptor outer segment. Its subcellular location is the photoreceptor inner segment. Plays a role in photoreceptor morphogenesis in the retina. May maintain cell polarization and adhesion. The polypeptide is Protein crumbs homolog 1 (Homo sapiens (Human)).